A 123-amino-acid polypeptide reads, in one-letter code: Periplasmic [Fe] hydrogenase small subunit (123 aa).

Positions 1 to 34 (MQIASITRRGFLKVACVTTGAALIGIRMTGKAVA) form a signal peptide, tat-type signal. Positions 103 to 123 (TTAGKLPNPRASEFEGPYPYE) are disordered.

In terms of assembly, heterodimer of a large and a small subunit. Post-translationally, predicted to be exported by the Tat system. The position of the signal peptide cleavage has been experimentally proven.

Its subcellular location is the periplasm. It carries out the reaction H2 + 2 oxidized [2Fe-2S]-[ferredoxin] = 2 reduced [2Fe-2S]-[ferredoxin] + 2 H(+). In terms of biological role, may be involved in hydrogen uptake for the reduction of sulfate to hydrogen sulfide in an electron transport chain. Cytochrome c3 is likely to be the physiological electron carrier for the enzyme. The protein is Periplasmic [Fe] hydrogenase small subunit (hydB) of Nitratidesulfovibrio vulgaris (strain ATCC 29579 / DSM 644 / CCUG 34227 / NCIMB 8303 / VKM B-1760 / Hildenborough) (Desulfovibrio vulgaris).